A 432-amino-acid polypeptide reads, in one-letter code: Serine hydroxymethyltransferase (432 aa).

(6S)-5,6,7,8-tetrahydrofolate contacts are provided by residues L131 and 135–137; that span reads GHL. K240 is subject to N6-(pyridoxal phosphate)lysine.

It belongs to the SHMT family. In terms of assembly, homodimer. Pyridoxal 5'-phosphate serves as cofactor.

It is found in the cytoplasm. The enzyme catalyses (6R)-5,10-methylene-5,6,7,8-tetrahydrofolate + glycine + H2O = (6S)-5,6,7,8-tetrahydrofolate + L-serine. The protein operates within one-carbon metabolism; tetrahydrofolate interconversion. It participates in amino-acid biosynthesis; glycine biosynthesis; glycine from L-serine: step 1/1. Its function is as follows. Catalyzes the reversible interconversion of serine and glycine with tetrahydrofolate (THF) serving as the one-carbon carrier. This reaction serves as the major source of one-carbon groups required for the biosynthesis of purines, thymidylate, methionine, and other important biomolecules. Also exhibits THF-independent aldolase activity toward beta-hydroxyamino acids, producing glycine and aldehydes, via a retro-aldol mechanism. This is Serine hydroxymethyltransferase from Bradyrhizobium diazoefficiens (strain JCM 10833 / BCRC 13528 / IAM 13628 / NBRC 14792 / USDA 110).